A 502-amino-acid polypeptide reads, in one-letter code: Probable cytosol aminopeptidase (502 aa).

Residues Lys-269 and Asp-274 each coordinate Mn(2+). Lys-281 is a catalytic residue. Residues Asp-292, Asp-351, and Glu-353 each coordinate Mn(2+). Arg-355 is a catalytic residue.

This sequence belongs to the peptidase M17 family. The cofactor is Mn(2+).

Its subcellular location is the cytoplasm. It carries out the reaction Release of an N-terminal amino acid, Xaa-|-Yaa-, in which Xaa is preferably Leu, but may be other amino acids including Pro although not Arg or Lys, and Yaa may be Pro. Amino acid amides and methyl esters are also readily hydrolyzed, but rates on arylamides are exceedingly low.. It catalyses the reaction Release of an N-terminal amino acid, preferentially leucine, but not glutamic or aspartic acids.. Its function is as follows. Presumably involved in the processing and regular turnover of intracellular proteins. Catalyzes the removal of unsubstituted N-terminal amino acids from various peptides. The protein is Probable cytosol aminopeptidase of Photobacterium profundum (strain SS9).